The primary structure comprises 376 residues: Chaperone protein DnaJ 2 (376 aa).

Residues 5–70 (DYYEVLGVNR…QKRAAYDRYG (66 aa)) enclose the J domain. The CR-type zinc-finger motif lies at 135 to 213 (GADKTIRIPT…CGGAGRVKRQ (79 aa)). Residues C148, C151, C165, C168, C187, C190, C201, and C204 each coordinate Zn(2+). CXXCXGXG motif repeat units lie at residues 148–155 (CETCHGSG), 165–172 (CPTCGGAG), 187–194 (CPKCHGTG), and 201–208 (CRDCGGAG).

Belongs to the DnaJ family. As to quaternary structure, homodimer. The cofactor is Zn(2+).

The protein localises to the cytoplasm. Functionally, participates actively in the response to hyperosmotic and heat shock by preventing the aggregation of stress-denatured proteins and by disaggregating proteins, also in an autonomous, DnaK-independent fashion. Unfolded proteins bind initially to DnaJ; upon interaction with the DnaJ-bound protein, DnaK hydrolyzes its bound ATP, resulting in the formation of a stable complex. GrpE releases ADP from DnaK; ATP binding to DnaK triggers the release of the substrate protein, thus completing the reaction cycle. Several rounds of ATP-dependent interactions between DnaJ, DnaK and GrpE are required for fully efficient folding. Also involved, together with DnaK and GrpE, in the DNA replication of plasmids through activation of initiation proteins. The chain is Chaperone protein DnaJ 2 from Aromatoleum aromaticum (strain DSM 19018 / LMG 30748 / EbN1) (Azoarcus sp. (strain EbN1)).